A 186-amino-acid polypeptide reads, in one-letter code: MVEELPSVFLVGPMGAGKTTIGRLLAKQLGRSFVDSDWYIESQTGADIAWIFAKEGEAGFRERETRAIDELTQQPQIVLATGGGAVMAAENREYLKQRGIVIYLNAPVDVQMARTAKDKSRPLLQQPNPRKILQGLYSARDPLYREVAHIIMPTGHTYPRHMVNQLLQQLNSFCISTSVDSEPEKD.

15-20 serves as a coordination point for ATP; sequence GAGKTT. T19 is a binding site for Mg(2+). Residues D37, R61, and G83 each coordinate substrate. An ATP-binding site is contributed by R121. Position 140 (R140) interacts with substrate.

Belongs to the shikimate kinase family. Monomer. Mg(2+) is required as a cofactor.

It localises to the cytoplasm. The catalysed reaction is shikimate + ATP = 3-phosphoshikimate + ADP + H(+). It participates in metabolic intermediate biosynthesis; chorismate biosynthesis; chorismate from D-erythrose 4-phosphate and phosphoenolpyruvate: step 5/7. Its function is as follows. Catalyzes the specific phosphorylation of the 3-hydroxyl group of shikimic acid using ATP as a cosubstrate. The chain is Shikimate kinase from Psychrobacter cryohalolentis (strain ATCC BAA-1226 / DSM 17306 / VKM B-2378 / K5).